The primary structure comprises 270 residues: 4-hydroxy-tetrahydrodipicolinate reductase (270 aa).

Residues 11–16 and E37 contribute to the NAD(+) site; that span reads GAGGRM. R38 provides a ligand contact to NADP(+). NAD(+)-binding positions include 101-103 and 125-128; these read GTT and APNM. Catalysis depends on H158, which acts as the Proton donor/acceptor. H159 lines the (S)-2,3,4,5-tetrahydrodipicolinate pocket. K162 serves as the catalytic Proton donor. Residue 168–169 coordinates (S)-2,3,4,5-tetrahydrodipicolinate; it reads GT.

The protein belongs to the DapB family.

The protein localises to the cytoplasm. It carries out the reaction (S)-2,3,4,5-tetrahydrodipicolinate + NAD(+) + H2O = (2S,4S)-4-hydroxy-2,3,4,5-tetrahydrodipicolinate + NADH + H(+). The enzyme catalyses (S)-2,3,4,5-tetrahydrodipicolinate + NADP(+) + H2O = (2S,4S)-4-hydroxy-2,3,4,5-tetrahydrodipicolinate + NADPH + H(+). It functions in the pathway amino-acid biosynthesis; L-lysine biosynthesis via DAP pathway; (S)-tetrahydrodipicolinate from L-aspartate: step 4/4. Functionally, catalyzes the conversion of 4-hydroxy-tetrahydrodipicolinate (HTPA) to tetrahydrodipicolinate. In Shewanella sp. (strain ANA-3), this protein is 4-hydroxy-tetrahydrodipicolinate reductase.